Consider the following 161-residue polypeptide: Protein-export protein SecB (161 aa).

Belongs to the SecB family. As to quaternary structure, homotetramer, a dimer of dimers. One homotetramer interacts with 1 SecA dimer.

It localises to the cytoplasm. In terms of biological role, one of the proteins required for the normal export of preproteins out of the cell cytoplasm. It is a molecular chaperone that binds to a subset of precursor proteins, maintaining them in a translocation-competent state. It also specifically binds to its receptor SecA. This Coxiella burnetii (strain Dugway 5J108-111) protein is Protein-export protein SecB.